Consider the following 96-residue polypeptide: MKLRPLHDRVVVRRVKEEEKTKGGIIIPDNAKEKPQEGIIVAVGNGAIGDDNERVPLDVKKGDRVLFGKWSGTEVKIDGEDLLIMKESDIMGILDK.

Belongs to the GroES chaperonin family. In terms of assembly, heptamer of 7 subunits arranged in a ring. Interacts with the chaperonin GroEL.

It is found in the cytoplasm. Its function is as follows. Together with the chaperonin GroEL, plays an essential role in assisting protein folding. The GroEL-GroES system forms a nano-cage that allows encapsulation of the non-native substrate proteins and provides a physical environment optimized to promote and accelerate protein folding. GroES binds to the apical surface of the GroEL ring, thereby capping the opening of the GroEL channel. The chain is Co-chaperonin GroES from Hyphomonas neptunium (strain ATCC 15444).